Consider the following 136-residue polypeptide: Large ribosomal subunit protein uL16 (136 aa).

It belongs to the universal ribosomal protein uL16 family. As to quaternary structure, part of the 50S ribosomal subunit.

Binds 23S rRNA and is also seen to make contacts with the A and possibly P site tRNAs. The polypeptide is Large ribosomal subunit protein uL16 (Shewanella pealeana (strain ATCC 700345 / ANG-SQ1)).